Reading from the N-terminus, the 339-residue chain is Cathepsin B (339 aa).

Residues 1 to 17 form the signal peptide; it reads MWWSLILLSCLLALTSA. Residues 18–79 constitute a propeptide, activation peptide; sequence HDKPSFHPLS…GRVAFGEDID (62 aa). 6 cysteine pairs are disulfide-bonded: Cys-93-Cys-122, Cys-105-Cys-150, Cys-141-Cys-207, Cys-142-Cys-146, Cys-179-Cys-211, and Cys-187-Cys-198. Residue Cys-108 is part of the active site. The N-linked (GlcNAc...) asparagine glycan is linked to Asn-192. An N6-acetyllysine modification is found at Lys-220. Active-site residues include His-278 and Asn-298. Positions 334–339 are excised as a propeptide; the sequence is QYWGRF.

It belongs to the peptidase C1 family. As to quaternary structure, dimer of a heavy chain and a light chain cross-linked by a disulfide bond. Interacts with SRPX2. Directly interacts with SHKBP1. As to expression, expressed in thyroid epithelial cells.

It localises to the lysosome. Its subcellular location is the melanosome. The protein localises to the secreted. The protein resides in the extracellular space. It is found in the apical cell membrane. It carries out the reaction Hydrolysis of proteins with broad specificity for peptide bonds. Preferentially cleaves -Arg-Arg-|-Xaa bonds in small molecule substrates (thus differing from cathepsin L). In addition to being an endopeptidase, shows peptidyl-dipeptidase activity, liberating C-terminal dipeptides.. Functionally, thiol protease which is believed to participate in intracellular degradation and turnover of proteins. Cleaves matrix extracellular phosphoglycoprotein MEPE. Involved in the solubilization of cross-linked TG/thyroglobulin in the thyroid follicle lumen. Has also been implicated in tumor invasion and metastasis. This Mus musculus (Mouse) protein is Cathepsin B (Ctsb).